A 348-amino-acid chain; its full sequence is Neuronal growth regulator 1 (348 aa).

Positions 1-31 are cleaved as a signal peptide; sequence MVLLAQGACCSNQWLAAVLLSLCSCLPAGQS. 3 consecutive Ig-like C2-type domains span residues 32–128, 133–215, and 219–307; these read VDFP…VHLT, PKIY…RVVV, and PTIQ…LPLN. A disulfide bridge links Cys54 with Cys112. N-linked (GlcNAc...) asparagine glycans are attached at residues Asn67 and Asn149. 2 disulfide bridges follow: Cys154–Cys197 and Cys239–Cys291. A Phosphotyrosine modification is found at Tyr181. N-linked (GlcNAc...) asparagine glycans are attached at residues Asn269, Asn280, Asn288, and Asn301. Gly318 carries the GPI-anchor amidated glycine lipid modification. A propeptide spans 319–348 (removed in mature form); sequence SACDLFSCWSLALTLSSVISIFYLKNAILQ.

This sequence belongs to the immunoglobulin superfamily. IgLON family. Post-translationally, glycosylated. As to expression, highly expressed in brain.

It localises to the cell membrane. Its function is as follows. May be involved in cell-adhesion. May function as a trans-neural growth-promoting factor in regenerative axon sprouting in the mammalian brain. In Rattus norvegicus (Rat), this protein is Neuronal growth regulator 1 (Negr1).